Here is a 192-residue protein sequence, read N- to C-terminus: Phosphoheptose isomerase (192 aa).

The 156-residue stretch at 37–192 folds into the SIS domain; sequence LADSFKAGGK…IQLIEKEMVK (156 aa). 52–54 is a binding site for substrate; sequence NGG. Zn(2+)-binding residues include His-61 and Glu-65. Substrate is bound by residues Glu-65, 93-94, 119-121, Ser-124, and Gln-172; these read ND and STS. The Zn(2+) site is built by Gln-172 and His-180.

It belongs to the SIS family. GmhA subfamily. Homotetramer. Zn(2+) is required as a cofactor.

It localises to the cytoplasm. It catalyses the reaction 2 D-sedoheptulose 7-phosphate = D-glycero-alpha-D-manno-heptose 7-phosphate + D-glycero-beta-D-manno-heptose 7-phosphate. It participates in carbohydrate biosynthesis; D-glycero-D-manno-heptose 7-phosphate biosynthesis; D-glycero-alpha-D-manno-heptose 7-phosphate and D-glycero-beta-D-manno-heptose 7-phosphate from sedoheptulose 7-phosphate: step 1/1. In terms of biological role, catalyzes the isomerization of sedoheptulose 7-phosphate in D-glycero-D-manno-heptose 7-phosphate. The polypeptide is Phosphoheptose isomerase (Salmonella dublin (strain CT_02021853)).